The sequence spans 197 residues: Shikimate kinase (197 aa).

14 to 19 (GSGKST) lines the ATP pocket. Residue serine 18 participates in Mg(2+) binding. Aspartate 36, arginine 60, and glycine 82 together coordinate substrate. Arginine 120 contacts ATP. Arginine 147 serves as a coordination point for substrate.

It belongs to the shikimate kinase family. As to quaternary structure, monomer. Mg(2+) is required as a cofactor.

The protein localises to the cytoplasm. The enzyme catalyses shikimate + ATP = 3-phosphoshikimate + ADP + H(+). It functions in the pathway metabolic intermediate biosynthesis; chorismate biosynthesis; chorismate from D-erythrose 4-phosphate and phosphoenolpyruvate: step 5/7. In terms of biological role, catalyzes the specific phosphorylation of the 3-hydroxyl group of shikimic acid using ATP as a cosubstrate. The sequence is that of Shikimate kinase from Prosthecochloris aestuarii (strain DSM 271 / SK 413).